The sequence spans 147 residues: Cilia- and flagella-associated protein 90 (147 aa).

The disordered stretch occupies residues 1–36 (MEDDEEETTASTLRGKPRPPPVSAQSAFSYIPPRRL).

As to quaternary structure, microtubule inner protein component of sperm flagellar doublet microtubules.

The protein localises to the cytoplasm. It is found in the cytoskeleton. It localises to the cilium axoneme. The protein resides in the flagellum axoneme. Microtubule inner protein (MIP) part of the dynein-decorated doublet microtubules (DMTs) in cilia axoneme, which is required for motile cilia beating. The protein is Cilia- and flagella-associated protein 90 of Homo sapiens (Human).